The following is a 366-amino-acid chain: GDSL esterase/lipase At1g74460 (366 aa).

Positions 1–20 are cleaved as a signal peptide; the sequence is MKFCAIFVLFIVLAINGYDC. Residue Ser30 is the Nucleophile of the active site. Residues Asn113 and Asn260 are each glycosylated (N-linked (GlcNAc...) asparagine). Residues Asp320 and His323 contribute to the active site.

It belongs to the 'GDSL' lipolytic enzyme family.

The protein localises to the secreted. In Arabidopsis thaliana (Mouse-ear cress), this protein is GDSL esterase/lipase At1g74460.